Here is an 84-residue protein sequence, read N- to C-terminus: Serine palmitoyltransferase-regulating protein TSC3 (84 aa).

A helical membrane pass occupies residues 63-83 (LHTIFLVVVSLSLFGLLKYIF).

It is found in the endoplasmic reticulum membrane. Functionally, stimulates the activity of serine palmitoyltransferase (SPT), and thus plays a role in the biosynthesis of sphingolipids. The chain is Serine palmitoyltransferase-regulating protein TSC3 (TSC3) from Kluyveromyces lactis (strain ATCC 8585 / CBS 2359 / DSM 70799 / NBRC 1267 / NRRL Y-1140 / WM37) (Yeast).